The following is a 368-amino-acid chain: N-acetylneuraminate epimerase (368 aa).

Residues methionine 1 to alanine 19 form the signal peptide. 7 Kelch repeats span residues threonine 40 to aspartate 84, asparagine 86 to asparagine 137, lysine 139 to alanine 173, tyrosine 174 to glycine 219, threonine 222 to glycine 265, glutamate 287 to asparagine 336, and leucine 338 to glutamine 367. Glutamate 228 (proton acceptor) is an active-site residue.

It belongs to the NanM family. Homodimer.

It localises to the periplasm. It carries out the reaction N-acetyl-alpha-neuraminate = N-acetyl-beta-neuraminate. In terms of biological role, converts alpha-N-acetylneuranimic acid (Neu5Ac) to the beta-anomer, accelerating the equilibrium between the alpha- and beta-anomers. Probably facilitates sialidase-negative bacteria to compete successfully for limited amounts of extracellular Neu5Ac, which is likely taken up in the beta-anomer. In addition, the rapid removal of sialic acid from solution might be advantageous to the bacterium to damp down host responses. This Shigella boydii serotype 4 (strain Sb227) protein is N-acetylneuraminate epimerase.